Reading from the N-terminus, the 402-residue chain is Galactoside 2-alpha-L-fucosyltransferase (402 aa).

The Cytoplasmic portion of the chain corresponds to 1 to 6 (MRYNSN). A helical; Signal-anchor for type II membrane protein transmembrane segment spans residues 7–27 (YLMYFCLVLGIFANIYVIIKI). Residues 28–402 (TLGSSHILEY…TDLNGKISKY (375 aa)) lie on the Lumenal side of the membrane. N-linked (GlcNAc...) asparagine glycans are attached at residues N119, N175, and N301.

The protein belongs to the glycosyltransferase 11 family. In terms of assembly, may form oligomers. Post-translationally, N-glycosylated. Expression is restricted to pharyngeal neurons and gland cells.

It localises to the golgi apparatus. The protein localises to the golgi stack membrane. It participates in protein modification; protein glycosylation. Functionally, selectively catalyzes the addition of fucose in alpha 1-2 linkage to Gal-beta-(1-&gt;3)-GalNAc-alpha-R, Gal-beta-(1-&gt;3)-(GlcNAc-beta-(1-&gt;6))-GalNAc-alpha-R and Gal-beta-(1-&gt;3)-GalNAc acceptors but not Gal-beta-(1-&gt;3)-GlcNAc-beta-(1-&gt;3)-Gal-beta-(1-&gt;4)-Glc in vitro. In Caenorhabditis elegans, this protein is Galactoside 2-alpha-L-fucosyltransferase.